Reading from the N-terminus, the 211-residue chain is MDAPGALAQTAAPGPGRKELKIVIVGDGGCGKTSLLMVYSQGSFPEHYAPSVFEKYTASVTVGSKEVTLNLYDTAGQEDYDRLRPLSYQNTHLVLICYDVMNPTSYDNVLIKWFPEVTHFCRGIPMVLIGCKTDLRKDKEQLRKLRAAQLEPITYMQGLSACEQIRAALYLECSAKFRENVEDVFREAAKVALSALKKAQRQKKRRLCLLL.

M1 bears the N-acetylmethionine mark. 26–33 (GDGGCGKT) contributes to the GTP binding site. The Effector region motif lies at 48-56 (YAPSVFEKY). Residues 73–77 (DTAGQ) and 131–134 (CKTD) each bind GTP. The residue at position 208 (C208) is a Cysteine methyl ester. C208 is lipidated: S-geranylgeranyl cysteine. The propeptide at 209-211 (LLL) is removed in mature form.

This sequence belongs to the small GTPase superfamily. Rho family.

It is found in the cell membrane. The protein resides in the cytoplasm. Its subcellular location is the cytoskeleton. Plasma membrane-associated small GTPase which cycles between an active GTP-bound and an inactive GDP-bound state. Causes the formation of thin, actin-rich surface projections called filopodia. Functions cooperatively with CDC42 and Rac to generate additional structures, increasing the diversity of actin-based morphology. In Homo sapiens (Human), this protein is Rho-related GTP-binding protein RhoF (RHOF).